Here is a 306-residue protein sequence, read N- to C-terminus: Large ribosomal subunit protein uL2m (306 aa).

The transit peptide at 1-60 directs the protein to the mitochondrion; that stretch reads MALRVVTRALGSLSLTPRIAAVPGPSLLPAAQVTNNVLLQLPSASMLLPSRPLLTSVALS.

The protein belongs to the universal ribosomal protein uL2 family. Component of the mitochondrial ribosome large subunit (39S) which comprises a 16S rRNA and about 50 distinct proteins.

It localises to the mitochondrion. In Bos taurus (Bovine), this protein is Large ribosomal subunit protein uL2m (MRPL2).